The sequence spans 499 residues: MSTANKKPAESVSMNAFKQPRSFYLIFSIELWERFGFYGLQGIMAVYLVKQLGMSEADSITLFSSFSALVYGLVAIGGWLGDKVLGTKRVIMLGTIVLAIGYALVAWSGHDAAIVYFGMATIAVGNGLFKANPSALLSTCYEKDDPRLDGAFTMYYMAINIGSFFSMLATPWLAEKFGWSVAFSLSFVGMLITLVNFIFCKKWVKDYGSKPDFAPLHVGKLLATIVGIVVLVAIATWLLHNQGIARLVLGVVALGIVIIFAKEAFAMQGAARRKMIVAFILMLEAIVFFVLYQQMPTSLNFFAIRNVEHSILGIAFQPEQFQALNPFWIMIGSPILAAIYNKMGDRLPMPFKFTIGMLLCSGAFLVLPLGAKFASEAGIVSVNWLILSYALQSIGELMISGLGLAMVAQLVPQRLMGFIMGSWFLTTAGAAMIAGKVANLMAVPENVSDPLQSLEVYGRVFMQIGIATGVIAVLMLLTAPLLNRMTQEDKPKETDTAHA.

Residues 1–34 (MSTANKKPAESVSMNAFKQPRSFYLIFSIELWER) are Cytoplasmic-facing. The chain crosses the membrane as a helical span at residues 35 to 55 (FGFYGLQGIMAVYLVKQLGMS). The Periplasmic portion of the chain corresponds to 56–59 (EADS). The chain crosses the membrane as a helical span at residues 60–80 (ITLFSSFSALVYGLVAIGGWL). The Cytoplasmic portion of the chain corresponds to 81–89 (GDKVLGTKR). Residues 90-110 (VIMLGTIVLAIGYALVAWSGH) form a helical membrane-spanning segment. Asp111 is a topological domain (periplasmic). Residues 112 to 132 (AAIVYFGMATIAVGNGLFKAN) traverse the membrane as a helical segment. Residues 133 to 153 (PSALLSTCYEKDDPRLDGAFT) lie on the Cytoplasmic side of the membrane. A helical transmembrane segment spans residues 154–174 (MYYMAINIGSFFSMLATPWLA). Residues 175–178 (EKFG) lie on the Periplasmic side of the membrane. Residues 179–199 (WSVAFSLSFVGMLITLVNFIF) traverse the membrane as a helical segment. Residues 200–217 (CKKWVKDYGSKPDFAPLH) are Cytoplasmic-facing. A helical transmembrane segment spans residues 218-238 (VGKLLATIVGIVVLVAIATWL). Residues 239-246 (LHNQGIAR) lie on the Periplasmic side of the membrane. Residues 247 to 267 (LVLGVVALGIVIIFAKEAFAM) traverse the membrane as a helical segment. Topologically, residues 268–274 (QGAARRK) are cytoplasmic. Residues 275–295 (MIVAFILMLEAIVFFVLYQQM) traverse the membrane as a helical segment. Topologically, residues 296-320 (PTSLNFFAIRNVEHSILGIAFQPEQ) are periplasmic. The helical transmembrane segment at 321 to 341 (FQALNPFWIMIGSPILAAIYN) threads the bilayer. Residues 342-350 (KMGDRLPMP) are Cytoplasmic-facing. Residues 351-371 (FKFTIGMLLCSGAFLVLPLGA) traverse the membrane as a helical segment. The Periplasmic segment spans residues 372 to 383 (KFASEAGIVSVN). A helical membrane pass occupies residues 384-404 (WLILSYALQSIGELMISGLGL). At 405-414 (AMVAQLVPQR) the chain is on the cytoplasmic side. A helical membrane pass occupies residues 415–435 (LMGFIMGSWFLTTAGAAMIAG). Over 436-459 (KVANLMAVPENVSDPLQSLEVYGR) the chain is Periplasmic. The helical transmembrane segment at 460 to 480 (VFMQIGIATGVIAVLMLLTAP) threads the bilayer. Residues 481 to 499 (LLNRMTQEDKPKETDTAHA) are Cytoplasmic-facing.

The protein belongs to the major facilitator superfamily. Proton-dependent oligopeptide transporter (POT/PTR) (TC 2.A.17) family. DtpA subfamily.

The protein localises to the cell inner membrane. Functionally, proton-dependent permease that transports di- and tripeptides. This is Dipeptide and tripeptide permease A from Cronobacter turicensis (strain DSM 18703 / CCUG 55852 / LMG 23827 / z3032).